A 469-amino-acid chain; its full sequence is Coumaroyl-CoA:anthocyanidin 3-O-glucoside-6''-O-coumaroyltransferase 1 (469 aa).

Position 1 is an N-acetylmethionine (Met1). Catalysis depends on proton acceptor residues His173 and Asp410.

Belongs to the plant acyltransferase family. Highly expressed in flowers, leaves and roots. Lower levels of expression in stems and siliques.

Functionally, involved in the acylation of the 6'' position of the 3-O-glucose residue of anthocyanin. Also able to use flavonol 3-glucosides as the acyl acceptor. This Arabidopsis thaliana (Mouse-ear cress) protein is Coumaroyl-CoA:anthocyanidin 3-O-glucoside-6''-O-coumaroyltransferase 1 (3AT1).